The primary structure comprises 221 residues: 6-phosphogluconate phosphatase (221 aa).

Catalysis depends on Asp10, which acts as the Nucleophile. Residues Asp10, Asp12, and Asp167 each coordinate Mg(2+). Residue 10-12 (DCD) participates in substrate binding.

This sequence belongs to the HAD-like hydrolase superfamily. CbbY/CbbZ/Gph/YieH family. Mg(2+) is required as a cofactor. Mn(2+) serves as cofactor. Requires Co(2+) as cofactor. The cofactor is Zn(2+).

Its function is as follows. Catalyzes strongly the dephosphorylation of 6-phosphogluconate (6P-Glu) and slightly the dephosphorylation of dihydroxyacetone phosphate (DHAP) and phosphoenolpyruvate (PEP). Also hydrolyzes both purines (GMP and IMP) and pyrimidines as secondary substrates. The sequence is that of 6-phosphogluconate phosphatase (yieH) from Escherichia coli (strain K12).